The sequence spans 1169 residues: Protein MBD-R2 (1169 aa).

A THAP-type zinc finger spans residues 5–59 (CCVANCPSTSRLLEHNGVTYHSFPLDPIIRAIWIKNSRISLERQITKSVLVCSRH). Disordered stretches follow at residues 99–122 (RALQ…STND), 140–211 (SAER…KYSN), and 347–394 (AEEG…CAPQ). Over residues 107 to 122 (EGTTETPGNAQSSTND) the composition is skewed to polar residues. Residues 140 to 160 (SAERKATEEGKTGKAADDVKN) show a composition bias toward basic and acidic residues. Positions 190 to 202 (PAPGSASSSNSPL) are enriched in low complexity. Over residues 353–363 (KSPTPVGTPVS) the composition is skewed to polar residues. Residues 445-514 (KPTVIVQDWR…DVYDFSIHRR (70 aa)) form the MBD domain. Residues 527–565 (GYNPQPPPKPRPMDVSMNSTLDQSITSQHSLPSTPMPVK) form a disordered region. A compositionally biased stretch (polar residues) spans 542–559 (SMNSTLDQSITSQHSLPS). The segment at 640–665 (YVCPREDCAKTYRKEDFLLIHIRHYH) adopts a C2H2-type zinc-finger fold. A disordered region spans residues 714 to 890 (QDLQQSRSFK…INAALAPPPA (177 aa)). The span at 726–742 (SVSATATSSTPSDITPT) shows a compositional bias: low complexity. Positions 774–784 (PTQSFNPSLSR) are enriched in polar residues. Over residues 798–810 (SGSRKSNRQRSQR) the composition is skewed to basic residues. Composition is skewed to polar residues over residues 853–862 (AATTPISSID) and 869–881 (SVST…QTDI).

As to quaternary structure, component of the non-specific lethal (NLS) histone acetyltransferase complex at least composed of mof, nls1, dgt1/NSL2, Rcd1/NSL3, Rcd5/MCRS2, MBD-R2 and wds.

It is found in the nucleus. Its subcellular location is the chromosome. In terms of biological role, component of the non-specific lethal (NLS) complex, a multiprotein complex that promotes expression of housekeeping genes on X chromosome and autosomes. This Drosophila melanogaster (Fruit fly) protein is Protein MBD-R2.